A 142-amino-acid chain; its full sequence is Arginine vasopressin-induced protein 1 (142 aa).

2 disordered regions span residues 1–28 and 74–142; these read MGTPASVVSEPPLWQVSTPQTRGRKQAS and RLRR…QIRH. Over residues 15-28 the composition is skewed to polar residues; that stretch reads QVSTPQTRGRKQAS. The span at 74–88 shows a compositional bias: basic residues; that stretch reads RLRRKRPPKQNHCSR. Residues 96-119 show a composition bias toward polar residues; it reads STASDPQASTTDTASSEQSGNSRR.

May be involved in MAP kinase activation, epithelial sodium channel (ENaC) down-regulation and cell cycling. The sequence is that of Arginine vasopressin-induced protein 1 (Avpi1) from Mus musculus (Mouse).